A 205-amino-acid chain; its full sequence is Regulator of G-protein signaling 4 (205 aa).

S-palmitoyl cysteine attachment occurs at residues Cys2, Cys12, and Cys95. Positions 62 to 178 (SLENLISHEC…LKSRFYLDLV (117 aa)) constitute an RGS domain.

In terms of processing, palmitoylated on Cys-2 and/or Cys-12. Post-translationally, phosphorylated by cyclic GMP-dependent protein kinase. In terms of tissue distribution, expressed in brain and heart. Expressed in brain at protein level. Expressed in prefontal and visual cortex. Isoform 4 and isoform 5 are expressed ubiquitously. Isoform 1, isoform 2 and isoform 3 are not expressed in the cerebellum.

Functionally, inhibits signal transduction by increasing the GTPase activity of G protein alpha subunits thereby driving them into their inactive GDP-bound form. Activity on G(z)-alpha is inhibited by phosphorylation of the G-protein. Activity on G(z)-alpha and G(i)-alpha-1 is inhibited by palmitoylation of the G-protein. In Homo sapiens (Human), this protein is Regulator of G-protein signaling 4 (RGS4).